Reading from the N-terminus, the 137-residue chain is Small ribosomal subunit protein uS12 (137 aa).

Residues 1 to 57 are disordered; sequence MPTINQLVRKPRKSKVKKSKSPALNVGYNSRKKVQTNVSSPQKRGVATRVGTMTPKK. Over residues 9–20 the composition is skewed to basic residues; that stretch reads RKPRKSKVKKSK. Residue Asp102 is modified to 3-methylthioaspartic acid.

The protein belongs to the universal ribosomal protein uS12 family. As to quaternary structure, part of the 30S ribosomal subunit. Contacts proteins S8 and S17. May interact with IF1 in the 30S initiation complex.

With S4 and S5 plays an important role in translational accuracy. In terms of biological role, interacts with and stabilizes bases of the 16S rRNA that are involved in tRNA selection in the A site and with the mRNA backbone. Located at the interface of the 30S and 50S subunits, it traverses the body of the 30S subunit contacting proteins on the other side and probably holding the rRNA structure together. The combined cluster of proteins S8, S12 and S17 appears to hold together the shoulder and platform of the 30S subunit. In Streptococcus suis (strain 05ZYH33), this protein is Small ribosomal subunit protein uS12.